Consider the following 938-residue polypeptide: Glutamate receptor ionotropic, NMDA 1 (938 aa).

A signal peptide spans 1-18; it reads MSTMHLLTFALLFSCSFA. Topologically, residues 19 to 559 are extracellular; sequence RAACDPKIVN…TLDSFMQPFQ (541 aa). 10 N-linked (GlcNAc...) asparagine glycosylation sites follow: Asn-61, Asn-203, Asn-239, Asn-276, Asn-300, Asn-350, Asn-368, Asn-440, Asn-471, and Asn-491. Cys-79 and Cys-308 are disulfide-bonded. 2 disulfides stabilise this stretch: Cys-420/Cys-454 and Cys-436/Cys-455. Glycine-binding residues include Pro-516, Thr-518, and Arg-523. The helical transmembrane segment at 560 to 580 threads the bilayer; the sequence is STLWLLVGLSVHVVAVMLYLL. At 581–602 the chain is on the cytoplasmic side; that stretch reads DRFSPFGRFKVNSEEEEEDALT. Positions 603–624 form an intramembrane region, discontinuously helical; that stretch reads LSSAMWFSWGVLLNSGIGEGAP. Residues 603 to 624 are pore-forming; that stretch reads LSSAMWFSWGVLLNSGIGEGAP. Topologically, residues 625-630 are cytoplasmic; that stretch reads RSFSAR. A helical membrane pass occupies residues 631-647; that stretch reads ILGMVWAGFAMIIVASY. At 648–812 the chain is on the extracellular side; that stretch reads TANLAAFLVL…NAPATLTFEN (165 aa). A glycan (N-linked (GlcNAc...) asparagine) is linked at Asn-674. 2 residues coordinate glycine: Ser-688 and Asp-732. Residues Cys-744 and Cys-798 are joined by a disulfide bond. N-linked (GlcNAc...) asparagine glycosylation occurs at Asn-771. The helical transmembrane segment at 813–833 threads the bilayer; that stretch reads MAGVFMLVAGGIVAGIFLIFI. At 834–938 the chain is on the cytoplasmic side; the sequence is EIAYKRHKDA…LQLCSRHRES (105 aa). At Ser-889 the chain carries Phosphoserine; by PKC. A disordered region spans residues 889 to 938; the sequence is SSFKRRRSSKDTSTGGGRGALQNQKDTVLPRRAIEREEGQLQLCSRHRES. Ser-890 carries the phosphoserine modification. Phosphoserine; by PKC is present on residues Ser-896 and Ser-897. Residues 916 to 927 are compositionally biased toward basic and acidic residues; sequence VLPRRAIEREEG.

This sequence belongs to the glutamate-gated ion channel (TC 1.A.10.1) family. NR1/GRIN1 subfamily. In terms of assembly, heterotetramer; the NMDAR subunits are modular and harbor tiered domains that function in concert to regulate opening and closing of the cation-selective ion channel pore. Forms heterotetrameric channels composed of two GluN1/zeta subunits (GRIN1), and two identical GluN2/epsilon subunits (GRIN2A, GRIN2B, GRIN2C or GRIN2D) or GluN3 subunits (GRIN3A or GRIN3B) (in vitro). Can also form heterotetrameric channels that contain at least two GluN1 subunits and at least two different GluN2 subunits (or a combination of one GluN2 and one GluN3 subunits) (in vitro). In vivo, the subunit composition may vary in function of the expression levels of the different subunits. Found in a complex with GRIN2A or GRIN2B, GRIN3A and PPP2CB. Found in a complex with GRIN2A or GRIN2B and GRIN3B. Interacts with SNX27 (via PDZ domain); the interaction is required for recycling to the plasma membrane when endocytosed and prevent degradation in lysosomes. Interacts with DLG4 and MPDZ. Interacts with LRFN1 and LRFN2. Interacts with MYZAP. Found in a complex with DLG4 and PRR7. Found in a complex with GRIN2B and PRR7. Interacts with PRR7; the interaction is reduced following NMDA receptor activity. NMDA is probably regulated by C-terminal phosphorylation of an isoform of GRIN1 by PKC. Dephosphorylated on Ser-897 probably by protein phosphatase 2A (PPP2CB). Its phosphorylated state is influenced by the formation of the NMDAR-PPP2CB complex and the NMDAR channel activity. As to expression, detected in brain (at protein level). Detected in brain.

The protein resides in the cell membrane. The protein localises to the postsynaptic cell membrane. It localises to the postsynaptic density membrane. Its subcellular location is the synaptic cell membrane. The catalysed reaction is Ca(2+)(in) = Ca(2+)(out). It carries out the reaction Na(+)(in) = Na(+)(out). The enzyme catalyses K(+)(in) = K(+)(out). In terms of biological role, component of N-methyl-D-aspartate (NMDA) receptors (NMDARs) that function as heterotetrameric, ligand-gated cation channels with high calcium permeability and voltage-dependent block by Mg(2+). NMDARs participate in synaptic plasticity for learning and memory formation by contributing to the long-term potentiation (LTP). Channel activation requires binding of the neurotransmitter L-glutamate to the GluN2 subunit, glycine or D-serine binding to the GluN1 subunit, plus membrane depolarization to eliminate channel inhibition by Mg(2+). NMDARs mediate simultaneously the potasium efflux and the influx of calcium and sodium. Each GluN2 or GluN3 subunit confers differential attributes to channel properties, including activation, deactivation and desensitization kinetics, pH sensitivity, Ca2(+) permeability, and binding to allosteric modulators. The chain is Glutamate receptor ionotropic, NMDA 1 from Mus musculus (Mouse).